We begin with the raw amino-acid sequence, 237 residues long: Mediator of RNA polymerase II transcription subunit 20 (237 aa).

Belongs to the Mediator complex subunit 20 family. In terms of assembly, component of the Mediator complex.

It is found in the nucleus. Functionally, component of the Mediator complex, a coactivator involved in the regulated transcription of nearly all RNA polymerase II-dependent genes. Mediator functions as a bridge to convey information from gene-specific regulatory proteins to the basal RNA polymerase II transcription machinery. Mediator is recruited to promoters by direct interactions with regulatory proteins and serves as a scaffold for the assembly of a functional preinitiation complex with RNA polymerase II and the general transcription factors. This is Mediator of RNA polymerase II transcription subunit 20 (SRB2) from Scheffersomyces stipitis (strain ATCC 58785 / CBS 6054 / NBRC 10063 / NRRL Y-11545) (Yeast).